The following is a 266-amino-acid chain: Killer cell lectin-like receptor 8 (266 aa).

Residues 1–44 (MSEQEVTFPTMRFHKSSGLNSQVRLEGTQRSRKAGLRVCSVPWQ) are Cytoplasmic-facing. The helical; Signal-anchor for type II membrane protein transmembrane segment at 45–66 (LIVIALGILCSLRLVIVAVFVT) threads the bilayer. The Extracellular segment spans residues 67–266 (KFFQYSQHKQ…CGKKLDKFPD (200 aa)). Asn-87 and Asn-104 each carry an N-linked (GlcNAc...) asparagine glycan. A C-type lectin domain is found at 143 to 261 (GVKYWFCYGT…PYYCICGKKL (119 aa)). 4 disulfides stabilise this stretch: Cys-149/Cys-154, Cys-167/Cys-255, Cys-171/Cys-257, and Cys-236/Cys-249.

As to quaternary structure, homodimer; disulfide-linked. Interacts with the adapter protein TYROBP/DAP12; the interaction leads to natural killer cell activation.

It is found in the cell membrane. Functionally, receptor on natural killer (NK) cells for class I MHC. This is Killer cell lectin-like receptor 8 (Klra8) from Mus musculus (Mouse).